The sequence spans 153 residues: Transcriptional repressor NrdR (153 aa).

A zinc finger lies at 3 to 34 (CPFCGYEDTRVLDSRELSEGRAIRRRRECPQC). Positions 49-139 (ITVIKKDGRR…VYKDFREIDQ (91 aa)) constitute an ATP-cone domain.

The protein belongs to the NrdR family. Zn(2+) is required as a cofactor.

In terms of biological role, negatively regulates transcription of bacterial ribonucleotide reductase nrd genes and operons by binding to NrdR-boxes. This Fervidobacterium nodosum (strain ATCC 35602 / DSM 5306 / Rt17-B1) protein is Transcriptional repressor NrdR.